A 675-amino-acid polypeptide reads, in one-letter code: Protein brown (675 aa).

Residues 1–419 (MQESGGSSGQ…TEDLRNIRSG (419 aa)) lie on the Cytoplasmic side of the membrane. The ABC transporter domain occupies 34–261 (YSFWNECRKK…EVVAESHESL (228 aa)). 66–73 (GGSGAGKT) contacts ATP. The segment at 229–249 (EDSFETPSGESSASGSGSKSI) is disordered. Residues 236–248 (SGESSASGSGSKS) show a composition bias toward low complexity. Residues 420 to 440 (LIAFGFFMITAVTLSLMYSGI) traverse the membrane as a helical segment. Over 441–460 (GGLTQRTVQDVGGSIFMLSN) the chain is Extracellular. The helical transmembrane segment at 461-481 (EMIFTFSYGVTYIFPAALPII) threads the bilayer. Over 482–497 (RREVGEGTYSLSAYYV) the chain is Cytoplasmic. The helical transmembrane segment at 498–518 (ALVLSFVPVAFFKGYVFLSVI) threads the bilayer. Residues 519–531 (YASIYYTRGFLLY) lie on the Extracellular side of the membrane. A helical membrane pass occupies residues 532-552 (LSMGFLMSLSAVAAVGYGVFL). Topologically, residues 553 to 568 (SSLFESDKMASECAAP) are cytoplasmic. The helical transmembrane segment at 569 to 589 (FDLIFLIFGGTYMNVDTVPGL) threads the bilayer. The Extracellular portion of the chain corresponds to 590-644 (KYLSLFFYSNEALMYKFWIDIDNIDCPVNEDHPCIKTGVEVLQQGSYRNADYTYW). The chain crosses the membrane as a helical span at residues 645–665 (LDCFSLVVVAVIFHIVSFGLV). Residues 666-675 (RRYIHRSGYY) lie on the Cytoplasmic side of the membrane.

Belongs to the ABC transporter superfamily. ABCG family. Eye pigment precursor importer (TC 3.A.1.204) subfamily. In terms of assembly, may form a heterodimer with w/white.

Its subcellular location is the membrane. The catalysed reaction is guanine(out) + ATP + H2O = guanine(in) + ADP + phosphate + H(+). The enzyme catalyses riboflavin(in) + ATP + H2O = riboflavin(out) + ADP + phosphate + H(+). It carries out the reaction (6S)-5,6,7,8-tetrahydrofolate(out) + ATP + H2O = (6S)-5,6,7,8-tetrahydrofolate(in) + ADP + phosphate + H(+). Functionally, ATP-dependent transporter of the ATP-binding cassette (ABC) family which transports various molecules including bioamines, neurotransmitters and metabolic intermediates. In the eye and probably in association with w/white, required for the transport of the eye red pigment precursor, guanine, into pigment cell granules. In Malpighian tubules, involved in guanine uptake. Probably in association with w/white, involved in aging-induced intestinal stem cell proliferation in the midgut by regulating tetrahydrofolate transport. In Drosophila melanogaster (Fruit fly), this protein is Protein brown.